A 588-amino-acid polypeptide reads, in one-letter code: Interferon-activable protein 208 (588 aa).

The region spanning 5–92 (MVNYYKQIVL…VDILRKEMEK (88 aa)) is the Pyrin domain. Disordered stretches follow at residues 157–183 (ATST…SLQT) and 469–526 (EMQN…RRVN). Polar residues-rich tracts occupy residues 172–183 (RFPTTASSSLQT) and 470–487 (MQNP…QPRL).

This sequence belongs to the HIN-200 family.

The chain is Interferon-activable protein 208 from Mus musculus (Mouse).